The primary structure comprises 104 residues: Flagellar hook-basal body complex protein FliE (104 aa).

It belongs to the FliE family.

It localises to the bacterial flagellum basal body. The chain is Flagellar hook-basal body complex protein FliE from Pectobacterium carotovorum subsp. carotovorum (strain PC1).